The primary structure comprises 427 residues: 3-phosphoshikimate 1-carboxyvinyltransferase (427 aa).

Residues lysine 22, serine 23, and arginine 27 each coordinate 3-phosphoshikimate. Residue lysine 22 coordinates phosphoenolpyruvate. Glycine 96 and arginine 124 together coordinate phosphoenolpyruvate. 3-phosphoshikimate contacts are provided by serine 170, serine 171, glutamine 172, serine 198, aspartate 313, asparagine 336, and lysine 340. Residue glutamine 172 coordinates phosphoenolpyruvate. Residue aspartate 313 is the Proton acceptor of the active site. The phosphoenolpyruvate site is built by arginine 344, arginine 386, and lysine 411.

Belongs to the EPSP synthase family. Monomer.

It is found in the cytoplasm. It carries out the reaction 3-phosphoshikimate + phosphoenolpyruvate = 5-O-(1-carboxyvinyl)-3-phosphoshikimate + phosphate. It participates in metabolic intermediate biosynthesis; chorismate biosynthesis; chorismate from D-erythrose 4-phosphate and phosphoenolpyruvate: step 6/7. Catalyzes the transfer of the enolpyruvyl moiety of phosphoenolpyruvate (PEP) to the 5-hydroxyl of shikimate-3-phosphate (S3P) to produce enolpyruvyl shikimate-3-phosphate and inorganic phosphate. This chain is 3-phosphoshikimate 1-carboxyvinyltransferase, found in Aeromonas salmonicida (strain A449).